Here is a 274-residue protein sequence, read N- to C-terminus: Large ribosomal subunit protein uL2 (274 aa).

Residues 223–274 are disordered; it reads GIAMNPVDHPHGGGEGRSKGNHPVTPWGMPTKGYKTRKKKQSDKYIISRRKK. Residues 230 to 240 are compositionally biased toward basic and acidic residues; the sequence is DHPHGGGEGRS. A compositionally biased stretch (basic residues) spans 256–274; sequence YKTRKKKQSDKYIISRRKK.

This sequence belongs to the universal ribosomal protein uL2 family. As to quaternary structure, part of the 50S ribosomal subunit. Forms a bridge to the 30S subunit in the 70S ribosome.

In terms of biological role, one of the primary rRNA binding proteins. Required for association of the 30S and 50S subunits to form the 70S ribosome, for tRNA binding and peptide bond formation. It has been suggested to have peptidyltransferase activity; this is somewhat controversial. Makes several contacts with the 16S rRNA in the 70S ribosome. The chain is Large ribosomal subunit protein uL2 from Nautilia profundicola (strain ATCC BAA-1463 / DSM 18972 / AmH).